A 427-amino-acid polypeptide reads, in one-letter code: 3-phosphoshikimate 1-carboxyvinyltransferase (427 aa).

The 3-phosphoshikimate site is built by Lys23, Ser24, and Arg28. Lys23 contacts phosphoenolpyruvate. Phosphoenolpyruvate-binding residues include Gly97 and Arg125. 3-phosphoshikimate contacts are provided by Ser170, Ser171, Gln172, Ser198, Asp314, Asn337, and Lys341. Gln172 contributes to the phosphoenolpyruvate binding site. The Proton acceptor role is filled by Asp314. Phosphoenolpyruvate is bound by residues Arg345, Arg387, and Lys412.

It belongs to the EPSP synthase family. In terms of assembly, monomer.

It is found in the cytoplasm. The enzyme catalyses 3-phosphoshikimate + phosphoenolpyruvate = 5-O-(1-carboxyvinyl)-3-phosphoshikimate + phosphate. Its pathway is metabolic intermediate biosynthesis; chorismate biosynthesis; chorismate from D-erythrose 4-phosphate and phosphoenolpyruvate: step 6/7. Its function is as follows. Catalyzes the transfer of the enolpyruvyl moiety of phosphoenolpyruvate (PEP) to the 5-hydroxyl of shikimate-3-phosphate (S3P) to produce enolpyruvyl shikimate-3-phosphate and inorganic phosphate. This chain is 3-phosphoshikimate 1-carboxyvinyltransferase, found in Buchnera aphidicola subsp. Acyrthosiphon pisum (strain Tuc7).